Consider the following 115-residue polypeptide: uncharacterized protein (115 aa).

This is an uncharacterized protein from Ostreid herpesvirus 1 (isolate France) (OsHV-1).